A 380-amino-acid chain; its full sequence is Homoserine O-acetyltransferase (380 aa).

One can recognise an AB hydrolase-1 domain in the interval 70–366 (NAVLVFHALT…SPHGHDAFLI (297 aa)). The active-site Nucleophile is S186. Residue R250 participates in substrate binding. Active-site residues include D333 and H361. D362 is a substrate binding site.

The protein belongs to the AB hydrolase superfamily. MetX family. As to quaternary structure, homodimer.

The protein resides in the cytoplasm. The catalysed reaction is L-homoserine + acetyl-CoA = O-acetyl-L-homoserine + CoA. Its pathway is amino-acid biosynthesis; L-methionine biosynthesis via de novo pathway; O-acetyl-L-homoserine from L-homoserine: step 1/1. Functionally, transfers an acetyl group from acetyl-CoA to L-homoserine, forming acetyl-L-homoserine. This Thermus thermophilus (strain ATCC BAA-163 / DSM 7039 / HB27) protein is Homoserine O-acetyltransferase.